The primary structure comprises 121 residues: MRKQPTVFEKLGGQAAMHAAVPLFYKKVLADDRVKHYFKNTNMEHQAKQQEDFLTMLLGGPNHYKGKNMAEAHKGMNLQNSHFDAIIENLAATLKELGVSDQIIGEAAKVIEHTRKDCLGK.

N-acetylmethionine is present on M1. H73 contributes to the heme binding site.

It belongs to the truncated hemoglobin family. Group I subfamily. In terms of assembly, monomer. Requires heme as cofactor.

The chain is Group 1 truncated hemoglobin from Tetrahymena thermophila.